The chain runs to 474 residues: Poly(A) polymerase catalytic subunit (474 aa).

Residues Asp193 and Asp195 contribute to the active site.

The protein belongs to the poxviridae poly(A) polymerase catalytic subunit family. As to quaternary structure, heterodimer of a large (catalytic) subunit and a small (regulatory) subunit.

It carries out the reaction RNA(n) + ATP = RNA(n)-3'-adenine ribonucleotide + diphosphate. In terms of biological role, polymerase that creates the 3'-poly(A) tail of mRNA's. The sequence is that of Poly(A) polymerase catalytic subunit (PAPL) from Bos taurus (Bovine).